We begin with the raw amino-acid sequence, 389 residues long: Protein IQ-domain 26 (389 aa).

IQ domains are found at residues 106 to 134 and 135 to 157; these read ERWAAVKIQSVFKGYLARKALRALKGLVK and LQALVRGYLVRKRAAETLHSMQA. The segment at 137–151 is calmodulin-binding; that stretch reads ALVRGYLVRKRAAET. Positions 347–374 are disordered; sequence SVSGVRMVQPQPQPQTQTQQQKRSPCSY.

This sequence belongs to the IQD family. Binds to multiple calmodulin (CaM) in the presence of Ca(2+) and CaM-like proteins.

The protein resides in the cell membrane. It localises to the cytoplasm. Its subcellular location is the cytoskeleton. May be involved in cooperative interactions with calmodulins or calmodulin-like proteins. Recruits calmodulin proteins to microtubules, thus being a potential scaffold in cellular signaling and trafficking. May associate with nucleic acids and regulate gene expression at the transcriptional or post-transcriptional level. This chain is Protein IQ-domain 26, found in Arabidopsis thaliana (Mouse-ear cress).